Consider the following 457-residue polypeptide: UDP-N-acetylmuramoyl-tripeptide--D-alanyl-D-alanine ligase (457 aa).

113–119 is a binding site for ATP; sequence GSNGKTT.

Belongs to the MurCDEF family. MurF subfamily.

The protein localises to the cytoplasm. It catalyses the reaction D-alanyl-D-alanine + UDP-N-acetyl-alpha-D-muramoyl-L-alanyl-gamma-D-glutamyl-meso-2,6-diaminopimelate + ATP = UDP-N-acetyl-alpha-D-muramoyl-L-alanyl-gamma-D-glutamyl-meso-2,6-diaminopimeloyl-D-alanyl-D-alanine + ADP + phosphate + H(+). The protein operates within cell wall biogenesis; peptidoglycan biosynthesis. Involved in cell wall formation. Catalyzes the final step in the synthesis of UDP-N-acetylmuramoyl-pentapeptide, the precursor of murein. The protein is UDP-N-acetylmuramoyl-tripeptide--D-alanyl-D-alanine ligase of Bacillus subtilis (strain 168).